A 119-amino-acid chain; its full sequence is Beta-2-microglobulin (119 aa).

The N-terminal stretch at 1-20 (MACSVVVALLALLSLSGLEA) is a signal peptide. An Ig-like C1-type domain is found at 25 to 114 (PKIQVYSRHP…VTFSTPKTVK (90 aa)). An intrachain disulfide couples Cys45 to Cys100.

It belongs to the beta-2-microglobulin family. As to quaternary structure, heterodimer of an alpha chain and a beta chain. Beta-2-microglobulin is the beta-chain of major histocompatibility complex class I molecules.

It is found in the secreted. Functionally, component of the class I major histocompatibility complex (MHC). Involved in the presentation of peptide antigens to the immune system. The protein is Beta-2-microglobulin (B2M) of Mico emiliae (Emilia's marmoset).